Consider the following 228-residue polypeptide: 2-C-methyl-D-erythritol 4-phosphate cytidylyltransferase (228 aa).

This sequence belongs to the IspD/TarI cytidylyltransferase family. IspD subfamily.

The enzyme catalyses 2-C-methyl-D-erythritol 4-phosphate + CTP + H(+) = 4-CDP-2-C-methyl-D-erythritol + diphosphate. Its pathway is isoprenoid biosynthesis; isopentenyl diphosphate biosynthesis via DXP pathway; isopentenyl diphosphate from 1-deoxy-D-xylulose 5-phosphate: step 2/6. Functionally, catalyzes the formation of 4-diphosphocytidyl-2-C-methyl-D-erythritol from CTP and 2-C-methyl-D-erythritol 4-phosphate (MEP). The polypeptide is 2-C-methyl-D-erythritol 4-phosphate cytidylyltransferase (Actinobacillus pleuropneumoniae serotype 5b (strain L20)).